A 150-amino-acid polypeptide reads, in one-letter code: Plasmin C (150 aa).

The signal sequence occupies residues 1–14; sequence MRSFFLLCALVAVC.

The chain is Plasmin C (PLSC) from Physarum polycephalum (Slime mold).